Here is a 252-residue protein sequence, read N- to C-terminus: TLC domain-containing protein 1 (252 aa).

An N-terminal signal peptide occupies residues 1–29 (MGPGWRAPSAALVGGSVALFGALRRAALA). Residues 30-47 (LPRPAAVRSRPGRVWRWR) lie on the Extracellular side of the membrane. Residues 41 to 235 (GRVWRWRNLL…LLRSDFFPSL (195 aa)) form the TLC domain. The helical transmembrane segment at 48–68 (NLLVSFAHSVLAGLWALFSLW) threads the bilayer. Residues 69–84 (QSPELLSDIQDGYSVS) lie on the Cytoplasmic side of the membrane. A helical membrane pass occupies residues 85–105 (GHLLVCFSSGYFIHDSLDIIF). The Extracellular portion of the chain corresponds to 106–124 (NQQSRSSWEYLVHHAMAIS). Residues 125–145 (AFVSLIITGRFLVAAMLLLLV) constitute an intramembrane region (helical). The Extracellular segment spans residues 146–174 (EVSNIFLTIRMLLKMSNVPSPALYEANKY). A helical membrane pass occupies residues 175 to 195 (VNLVMYFAFRLAPQVYLTWYF). Over 196 to 202 (VRYVEVQ) the chain is Cytoplasmic. A helical membrane pass occupies residues 203–223 (GQGAFLMANLLLLDAMILMYF). The Extracellular portion of the chain corresponds to 224 to 252 (SRLLRSDFFPSLRKGSVGRDVDGEKFLID).

Interacts with CACNA1C in vitro; however the relevance of the interaction in vivo is unclear.

The protein resides in the cell membrane. In terms of biological role, regulates the composition and fluidity of the plasma membrane. Inhibits the incorporation of membrane-fluidizing phospholipids containing omega-3 long-chain polyunsaturated fatty acids (LCPUFA) and thereby promotes membrane rigidity. Does not appear to have any effect on LCPUFA synthesis. This chain is TLC domain-containing protein 1 (TLCD1), found in Gallus gallus (Chicken).